A 432-amino-acid chain; its full sequence is Serine/threonine-protein kinase stk11 (432 aa).

The 261-residue stretch at 52-312 (YLMGDLLGEG…IQQIRQHNWF (261 aa)) folds into the Protein kinase domain. Residues 58–66 (LGEGSYGKV) and Lys-81 contribute to the ATP site. The Proton acceptor role is filled by Asp-179. Thr-192 carries the phosphothreonine; by autocatalysis modification. The segment at 398 to 432 (TESQLKTERRVSSSSQRKASTTGSKVRKLSACKQQ) is disordered. The span at 409 to 421 (SSSSQRKASTTGS) shows a compositional bias: polar residues. Positions 422–432 (KVRKLSACKQQ) are enriched in basic residues. Position 427 is a phosphoserine; by PKA (Ser-427).

This sequence belongs to the protein kinase superfamily. CAMK Ser/Thr protein kinase family. LKB1 subfamily. As to quaternary structure, catalytic component of a trimeric complex composed of STK11/LKB1, STRAD (STRADA or STRADB) and CAB39/MO25 (CAB39/MO25alpha or CAB39L/MO25beta). The cofactor is Mg(2+). Requires Mn(2+) as cofactor. In terms of processing, phosphorylated by a cAMP-dependent protein kinase. Autophosphorylated in a reaction that prefers Mn(2+) to Mg(2+). As to expression, oocytes, eggs and early embryos.

It localises to the nucleus. The protein localises to the cytoplasm. The catalysed reaction is L-seryl-[protein] + ATP = O-phospho-L-seryl-[protein] + ADP + H(+). The enzyme catalyses L-threonyl-[protein] + ATP = O-phospho-L-threonyl-[protein] + ADP + H(+). Functionally, tumor suppressor serine/threonine-protein kinase that controls the activity of AMP-activated protein kinase (AMPK) family members, thereby playing a role in various processes such as cell metabolism, cell polarity, apoptosis and DNA damage response. Acts by phosphorylating the T-loop of AMPK family proteins, leading to promote their activity. This Xenopus laevis (African clawed frog) protein is Serine/threonine-protein kinase stk11.